Here is a 92-residue protein sequence, read N- to C-terminus: DNA-directed RNA polymerase subunit Rpo5 (92 aa).

This sequence belongs to the archaeal Rpo5/eukaryotic RPB5 RNA polymerase subunit family. In terms of assembly, part of the RNA polymerase complex.

It localises to the cytoplasm. The enzyme catalyses RNA(n) + a ribonucleoside 5'-triphosphate = RNA(n+1) + diphosphate. DNA-dependent RNA polymerase (RNAP) catalyzes the transcription of DNA into RNA using the four ribonucleoside triphosphates as substrates. The chain is DNA-directed RNA polymerase subunit Rpo5 from Methanopyrus kandleri (strain AV19 / DSM 6324 / JCM 9639 / NBRC 100938).